The primary structure comprises 268 residues: Riboflavin transport system permease protein RibX (268 aa).

The next 6 helical transmembrane spans lie at 24–44, 76–96, 119–139, 140–160, 185–205, and 236–256; these read ALGLPVTLMLLLVFWQAGVTL, LATLSAALGGFTLALIIALIL, AIPVVAVAPLIILWFGAGLTS, KVLVAALITFLPILINTVVAI, VEAPLALPVLFGGVRTGLALA, and LIFVALATLALITLTLYVLAG. Positions 75 to 255 constitute an ABC transmembrane type-1 domain; sequence TLATLSAALG…LITLTLYVLA (181 aa).

Belongs to the binding-protein-dependent transport system permease family. As to quaternary structure, the complex is likely composed of an ATP-binding protein, a transmembrane protein (RibX) and a solute-binding protein (RibY).

It localises to the cell membrane. Functionally, part of an ABC transporter complex that transports riboflavin into the cell. The sequence is that of Riboflavin transport system permease protein RibX from Chloroflexus aurantiacus (strain ATCC 29366 / DSM 635 / J-10-fl).